We begin with the raw amino-acid sequence, 214 residues long: Adenylate kinase (214 aa).

10–15 (GAGKGT) serves as a coordination point for ATP. The NMP stretch occupies residues 30-59 (STGDLLREEIANNTELGKQAKKLIDGGNLV). AMP is bound by residues T31, R36, 57 to 59 (NLV), 83 to 86 (GFPR), and Q90. The interval 124 to 161 (LRRQCKNCGNIFNLRFIKNFDGKCPKCGSTDIYQRADD) is LID. R125 contacts ATP. Zn(2+)-binding residues include C128 and C131. ATP is bound at residue 134–135 (IF). The Zn(2+) site is built by C147 and C150. AMP contacts are provided by R158 and R169. K197 is an ATP binding site.

The protein belongs to the adenylate kinase family. As to quaternary structure, monomer.

The protein resides in the cytoplasm. The enzyme catalyses AMP + ATP = 2 ADP. Its pathway is purine metabolism; AMP biosynthesis via salvage pathway; AMP from ADP: step 1/1. Catalyzes the reversible transfer of the terminal phosphate group between ATP and AMP. Plays an important role in cellular energy homeostasis and in adenine nucleotide metabolism. In Elusimicrobium minutum (strain Pei191), this protein is Adenylate kinase.